We begin with the raw amino-acid sequence, 117 residues long: Large ribosomal subunit protein bL20 (117 aa).

The protein belongs to the bacterial ribosomal protein bL20 family.

Binds directly to 23S ribosomal RNA and is necessary for the in vitro assembly process of the 50S ribosomal subunit. It is not involved in the protein synthesizing functions of that subunit. In Finegoldia magna (strain ATCC 29328 / DSM 20472 / WAL 2508) (Peptostreptococcus magnus), this protein is Large ribosomal subunit protein bL20.